The following is a 506-amino-acid chain: Probable cytosol aminopeptidase (506 aa).

2 residues coordinate Mn(2+): lysine 270 and aspartate 275. The active site involves lysine 282. Positions 293, 352, and 354 each coordinate Mn(2+). Arginine 356 is an active-site residue.

Belongs to the peptidase M17 family. Mn(2+) serves as cofactor.

The protein localises to the cytoplasm. It carries out the reaction Release of an N-terminal amino acid, Xaa-|-Yaa-, in which Xaa is preferably Leu, but may be other amino acids including Pro although not Arg or Lys, and Yaa may be Pro. Amino acid amides and methyl esters are also readily hydrolyzed, but rates on arylamides are exceedingly low.. The enzyme catalyses Release of an N-terminal amino acid, preferentially leucine, but not glutamic or aspartic acids.. In terms of biological role, presumably involved in the processing and regular turnover of intracellular proteins. Catalyzes the removal of unsubstituted N-terminal amino acids from various peptides. The polypeptide is Probable cytosol aminopeptidase (Photorhabdus laumondii subsp. laumondii (strain DSM 15139 / CIP 105565 / TT01) (Photorhabdus luminescens subsp. laumondii)).